Reading from the N-terminus, the 794-residue chain is Protein SEY1 (794 aa).

The Cytoplasmic portion of the chain corresponds to M1 to A687. Residues G43–Y272 enclose the GB1/RHD3-type G domain. G53–S60 contacts GTP. Residues V331 to C352 adopt a coiled-coil conformation. The helical transmembrane segment at I688–L708 threads the bilayer. The Lumenal portion of the chain corresponds to R709 to P711. Residues L712–L732 form a helical membrane-spanning segment. Residues W733–E794 lie on the Cytoplasmic side of the membrane. The tract at residues N770 to E794 is disordered. The span at E775–E794 shows a compositional bias: basic and acidic residues.

It belongs to the TRAFAC class dynamin-like GTPase superfamily. GB1/RHD3 GTPase family. RHD3 subfamily.

It is found in the endoplasmic reticulum membrane. Functionally, cooperates with the reticulon proteins and tubule-shaping DP1 family proteins to generate and maintain the structure of the tubular endoplasmic reticulum network. Has GTPase activity, which is required for its function in ER organization. The sequence is that of Protein SEY1 from Zygosaccharomyces rouxii (strain ATCC 2623 / CBS 732 / NBRC 1130 / NCYC 568 / NRRL Y-229).